A 185-amino-acid polypeptide reads, in one-letter code: Large ribosomal subunit protein uL5 (185 aa).

This sequence belongs to the universal ribosomal protein uL5 family. As to quaternary structure, part of the 50S ribosomal subunit; part of the 5S rRNA/L5/L18/L25 subcomplex. Contacts the 5S rRNA and the P site tRNA. Forms a bridge to the 30S subunit in the 70S ribosome.

In terms of biological role, this is one of the proteins that bind and probably mediate the attachment of the 5S RNA into the large ribosomal subunit, where it forms part of the central protuberance. In the 70S ribosome it contacts protein S13 of the 30S subunit (bridge B1b), connecting the 2 subunits; this bridge is implicated in subunit movement. Contacts the P site tRNA; the 5S rRNA and some of its associated proteins might help stabilize positioning of ribosome-bound tRNAs. This is Large ribosomal subunit protein uL5 from Parabacteroides distasonis (strain ATCC 8503 / DSM 20701 / CIP 104284 / JCM 5825 / NCTC 11152).